We begin with the raw amino-acid sequence, 284 residues long: MQHPFHSYPAPAKLNLLLHVVGKRPDGYHLLETVFRFIDFGDTLELAVRDDGQIVLLTPTDGVPPEQDLTVRAARLLQRESGCRLGASIKLEKRTPMGGGLGGGSSDAATALIALNRLWGLAWPRERLQALGLQLGADVPVFIFGRNALATGVGEVLEPIPLKPAWYLVIHPQVHVSTIEVFRNFSQTVLTEIGRVGIMRILETTQQRRNDLQSVVEKRFPAVNEVLSELRKYGSPLMTGSGSCVFLEFESKDEADKVYRVLSQKYQGFVAEGLDVHPLFDSAE.

Lysine 13 is a catalytic residue. 96 to 106 (PMGGGLGGGSS) lines the ATP pocket. Residue aspartate 138 is part of the active site.

The protein belongs to the GHMP kinase family. IspE subfamily.

The catalysed reaction is 4-CDP-2-C-methyl-D-erythritol + ATP = 4-CDP-2-C-methyl-D-erythritol 2-phosphate + ADP + H(+). It participates in isoprenoid biosynthesis; isopentenyl diphosphate biosynthesis via DXP pathway; isopentenyl diphosphate from 1-deoxy-D-xylulose 5-phosphate: step 3/6. Catalyzes the phosphorylation of the position 2 hydroxy group of 4-diphosphocytidyl-2C-methyl-D-erythritol. The sequence is that of 4-diphosphocytidyl-2-C-methyl-D-erythritol kinase from Chromobacterium violaceum (strain ATCC 12472 / DSM 30191 / JCM 1249 / CCUG 213 / NBRC 12614 / NCIMB 9131 / NCTC 9757 / MK).